The sequence spans 87 residues: Ragulator complex protein LAMTOR4 homolog (87 aa).

The protein belongs to the LAMTOR4 family. As to quaternary structure, part of the Ragulator complex.

It is found in the lysosome. In terms of biological role, regulator of the TOR pathway, a signaling cascade that promotes cell growth in response to growth factors, energy levels, and amino acids. As part of the Ragulator complex, may activate the TOR signaling cascade in response to amino acids. This Dictyostelium discoideum (Social amoeba) protein is Ragulator complex protein LAMTOR4 homolog.